The primary structure comprises 490 residues: Lignostilbene-alpha,beta-dioxygenase isozyme III (490 aa).

Residues His-167, His-218, His-285, and His-477 each contribute to the Fe cation site.

Belongs to the carotenoid oxygenase family. As to quaternary structure, homodimer of two beta subunits. It depends on Fe(2+) as a cofactor.

The enzyme catalyses 1,2-bis(4-hydroxy-3-methoxyphenyl)ethylene + O2 = 2 vanillin. Its activity is regulated as follows. Activity is high with beta-5 type stilbene and minimal with beta-1 type stilbene. A 4-hydroxyl group and trans-stilbene structure is essential for the binding of substrates to the enzyme. Functionally, catalyzes the cleavage of the interphenyl double bond (C alpha-C beta) of lignin-derived polyphenolic diaryl-propane type compounds (Stilbene). The sequence is that of Lignostilbene-alpha,beta-dioxygenase isozyme III from Sphingomonas paucimobilis (Pseudomonas paucimobilis).